Here is a 265-residue protein sequence, read N- to C-terminus: Phosphonates import ATP-binding protein PhnC 1 (265 aa).

Positions 7–252 (IEVSNLSKSF…KLNEIYGTAA (246 aa)) constitute an ABC transporter domain. Residue 39 to 46 (GASGSGKS) participates in ATP binding.

Belongs to the ABC transporter superfamily. Phosphonates importer (TC 3.A.1.9.1) family. As to quaternary structure, the complex is composed of two ATP-binding proteins (PhnC), two transmembrane proteins (PhnE) and a solute-binding protein (PhnD).

The protein resides in the cell inner membrane. It catalyses the reaction phosphonate(out) + ATP + H2O = phosphonate(in) + ADP + phosphate + H(+). Functionally, part of the ABC transporter complex PhnCDE involved in phosphonates import. Responsible for energy coupling to the transport system. The chain is Phosphonates import ATP-binding protein PhnC 1 from Nostoc sp. (strain PCC 7120 / SAG 25.82 / UTEX 2576).